We begin with the raw amino-acid sequence, 111 residues long: Universal stress protein B (111 aa).

2 helical membrane-spanning segments follow: residues 1–21 (MIST…NMAR) and 90–110 (FILT…LLIW).

It belongs to the universal stress protein B family.

It is found in the cell inner membrane. This Enterobacter sp. (strain 638) protein is Universal stress protein B.